The primary structure comprises 455 residues: Chromosomal replication initiator protein DnaA (455 aa).

The interval 1-73 is domain I, interacts with DnaA modulators; that stretch reads METSLETLWS…RDVVHEILGH (73 aa). The segment at 73–116 is domain II; sequence HPVEIQIEIAQGDSNATISAPEVASPPPTASPVENTNTSQRQQA. Positions 92–116 are disordered; that stretch reads APEVASPPPTASPVENTNTSQRQQA. Residues 104–116 are compositionally biased toward polar residues; the sequence is PVENTNTSQRQQA. The domain III, AAA+ region stretch occupies residues 117–333; sequence SLNPKYVFSR…GALIRAVAYI (217 aa). ATP contacts are provided by glycine 161, glycine 163, lysine 164, and threonine 165. The tract at residues 334–455 is domain IV, binds dsDNA; the sequence is SISGLPMNVE…GDRIKLANQP (122 aa).

It belongs to the DnaA family. As to quaternary structure, oligomerizes as a right-handed, spiral filament on DNA at oriC.

Its subcellular location is the cytoplasm. Plays an essential role in the initiation and regulation of chromosomal replication. ATP-DnaA binds to the origin of replication (oriC) to initiate formation of the DNA replication initiation complex once per cell cycle. Binds the DnaA box (a 9 base pair repeat at the origin) and separates the double-stranded (ds)DNA. Forms a right-handed helical filament on oriC DNA; dsDNA binds to the exterior of the filament while single-stranded (ss)DNA is stabiized in the filament's interior. The ATP-DnaA-oriC complex binds and stabilizes one strand of the AT-rich DNA unwinding element (DUE), permitting loading of DNA polymerase. After initiation quickly degrades to an ADP-DnaA complex that is not apt for DNA replication. Binds acidic phospholipids. The protein is Chromosomal replication initiator protein DnaA of Acaryochloris marina (strain MBIC 11017).